A 341-amino-acid polypeptide reads, in one-letter code: Adhesion protein Bd37 (341 aa).

The signal sequence occupies residues 1 to 21 (MKTSKILNTAAICLLAMGFNG). Residues asparagine 23 and asparagine 30 are each glycosylated (N-linked (GlcNAc...) asparagine). A disulfide bond links cysteine 26 and cysteine 307. Positions 36 to 75 (AAANPVVSTPGNDAQQAGTQQGGANSKSVPEQQPQQAAGE) are disordered. Over residues 49 to 59 (AQQAGTQQGGA) the composition is skewed to low complexity. The span at 60–75 (NSKSVPEQQPQQAAGE) shows a compositional bias: polar residues. The GPI-anchor amidated serine moiety is linked to residue serine 311. Positions 312 to 341 (GQGSSPKKPSFAAVPSSLSAIVFGIIVSMF) are cleaved as a propeptide — removed in mature form.

The signal sequence is cleaved. In terms of processing, glycosylated. Post-translationally, palmitoylated. Not myristoylated.

It localises to the cell membrane. Its subcellular location is the secreted. The protein resides in the vesicle. Its function is as follows. Binds to host erythrocytes. The sequence is that of Adhesion protein Bd37 from Babesia divergens.